The following is a 439-amino-acid chain: Xylose isomerase (439 aa).

Residues His-101 and Asp-104 contribute to the active site. Positions 232, 268, 271, 296, 307, 309, and 339 each coordinate Mg(2+).

It belongs to the xylose isomerase family. In terms of assembly, homotetramer. Mg(2+) is required as a cofactor.

It is found in the cytoplasm. It carries out the reaction alpha-D-xylose = alpha-D-xylulofuranose. This chain is Xylose isomerase, found in Photorhabdus laumondii subsp. laumondii (strain DSM 15139 / CIP 105565 / TT01) (Photorhabdus luminescens subsp. laumondii).